Reading from the N-terminus, the 1457-residue chain is Eye-specific diacylglycerol kinase (1457 aa).

Disordered stretches follow at residues 1-123 (MQQQ…SSEA), 136-177 (RSHS…PPCI), and 207-339 (YSNT…QPTT). Composition is skewed to low complexity over residues 22–62 (SATT…LRTT), 98–115 (SQRA…SSAS), and 141–154 (DSAT…DSGT). The segment covering 214–253 (ASEDEDEVEGHNAEEEEEGSAAIEDAEEETTEAATEEADE) has biased composition (acidic residues). A compositionally biased stretch (basic and acidic residues) spans 254-266 (DPRTEVESEHDHD). The span at 294–303 (RLPRQMRRHT) shows a compositional bias: basic residues. 2 consecutive Phorbol-ester/DAG-type zinc fingers follow at residues 591–641 (HYWK…TLAC) and 661–724 (HHWV…GEEC). The tract at residues 758–799 (NNAASGSGGGGAGGGAGGGGGKSKKQTQRRQKGKEEKKEPRA) is disordered. Positions 763-778 (GSGGGGAGGGAGGGGG) are enriched in gly residues. The span at 779-789 (KSKKQTQRRQK) shows a compositional bias: basic residues. Positions 808–944 (PEVIPVIVFI…MDRWRVKVTP (137 aa)) constitute a DAGKc domain. Residues 1264 to 1302 (TPDQERSFAAFSQRQAQNERRQMDQAQGRGPGSTDEDLQ) are disordered. ANK repeat units lie at residues 1320 to 1349 (QTSD…SLQS), 1353 to 1382 (NGQT…RRLI), 1389 to 1418 (LGQT…HLDT), and 1422 to 1451 (GGNT…TQPV).

It belongs to the eukaryotic diacylglycerol kinase family. In terms of tissue distribution, expressed specifically in adult eye.

It localises to the membrane. The enzyme catalyses a 1,2-diacyl-sn-glycerol + ATP = a 1,2-diacyl-sn-glycero-3-phosphate + ADP + H(+). Its function is as follows. Required for the maintenance of phospholipid turnover within the photoreceptor. The sequence is that of Eye-specific diacylglycerol kinase (rdgA) from Drosophila melanogaster (Fruit fly).